Reading from the N-terminus, the 105-residue chain is UPF0145 protein LPC_0273 (105 aa).

Belongs to the UPF0145 family.

This Legionella pneumophila (strain Corby) protein is UPF0145 protein LPC_0273.